The following is a 184-amino-acid chain: ADP-ribosylation factor-like protein 8c (184 aa).

The segment at residues 1–18 is an intramembrane region (note=Mediates targeting to membranes); it reads MGLWDSLLNWLRSLFFKQ. Residues 29 to 34, 48 to 51, 70 to 74, and 129 to 132 contribute to the GTP site; these read NAGKTS, MIPT, DLGGQ, and NKID.

The protein belongs to the small GTPase superfamily. Arf family. In terms of assembly, interacts with tubulin.

The protein localises to the late endosome membrane. It localises to the lysosome membrane. The protein resides in the cytoplasm. Its subcellular location is the cytoskeleton. It is found in the spindle. Functionally, may play a role in lysosome motility. May play a role in chromosome segregation. In terms of biological role, (Microbial infection) Component of tomato mosaic virus (ToMV) RNA replication complexes. Required for tobamovirus multiplication, especially for efficient negative-strand RNA synthesis and viral RNA capping. This is ADP-ribosylation factor-like protein 8c from Arabidopsis thaliana (Mouse-ear cress).